Consider the following 210-residue polypeptide: UPF0173 protein PYRAB01190 (210 aa).

This sequence belongs to the UPF0173 family.

This chain is UPF0173 protein PYRAB01190, found in Pyrococcus abyssi (strain GE5 / Orsay).